Consider the following 133-residue polypeptide: MAKWNSDCSLEFGVFVLNGYEYLLGFLLISSLVPILSLTASRLLRPGRRGPERRTTYESGMEPIGGAWIQFNVRYYMFALVFVIFDVETVFLYPWAVAFNRLGLLAFVEALIFITILVVGLAYAWRKGALEWS.

Helical transmembrane passes span 22–44, 77–97, and 102–122; these read YLLGFLLISSLVPILSLTASRLL, MFALVFVIFDVETVFLYPWAV, and LGLLAFVEALIFITILVVGLA.

This sequence belongs to the complex I subunit 3 family. As to quaternary structure, NDH-1 can be composed of about 15 different subunits; different subcomplexes with different compositions have been identified which probably have different functions.

It is found in the cellular thylakoid membrane. It catalyses the reaction a plastoquinone + NADH + (n+1) H(+)(in) = a plastoquinol + NAD(+) + n H(+)(out). It carries out the reaction a plastoquinone + NADPH + (n+1) H(+)(in) = a plastoquinol + NADP(+) + n H(+)(out). NDH-1 shuttles electrons from an unknown electron donor, via FMN and iron-sulfur (Fe-S) centers, to quinones in the respiratory and/or the photosynthetic chain. The immediate electron acceptor for the enzyme in this species is believed to be plastoquinone. Couples the redox reaction to proton translocation, and thus conserves the redox energy in a proton gradient. Cyanobacterial NDH-1 also plays a role in inorganic carbon-concentration. The protein is NAD(P)H-quinone oxidoreductase subunit 3 of Synechococcus sp. (strain ATCC 27144 / PCC 6301 / SAUG 1402/1) (Anacystis nidulans).